Consider the following 309-residue polypeptide: 4-diphosphocytidyl-2-C-methyl-D-erythritol kinase (309 aa).

Residue Lys-28 is part of the active site. Position 120-130 (120-130 (PSQAGMGGGSS)) interacts with ATP. Asp-162 is a catalytic residue.

This sequence belongs to the GHMP kinase family. IspE subfamily.

It carries out the reaction 4-CDP-2-C-methyl-D-erythritol + ATP = 4-CDP-2-C-methyl-D-erythritol 2-phosphate + ADP + H(+). It functions in the pathway isoprenoid biosynthesis; isopentenyl diphosphate biosynthesis via DXP pathway; isopentenyl diphosphate from 1-deoxy-D-xylulose 5-phosphate: step 3/6. Functionally, catalyzes the phosphorylation of the position 2 hydroxy group of 4-diphosphocytidyl-2C-methyl-D-erythritol. The chain is 4-diphosphocytidyl-2-C-methyl-D-erythritol kinase from Polaromonas sp. (strain JS666 / ATCC BAA-500).